The chain runs to 354 residues: Methionine import ATP-binding protein MetN (354 aa).

An ABC transporter domain is found at 8-250; sequence LDHIDITFHQ…PKEALTQEFI (243 aa). Residue 42–49 coordinates ATP; sequence GYSGAGKS.

It belongs to the ABC transporter superfamily. Methionine importer (TC 3.A.1.24) family. The complex is composed of two ATP-binding proteins (MetN), two transmembrane proteins (MetI) and a solute-binding protein (MetQ).

It is found in the cell membrane. The catalysed reaction is L-methionine(out) + ATP + H2O = L-methionine(in) + ADP + phosphate + H(+). It catalyses the reaction D-methionine(out) + ATP + H2O = D-methionine(in) + ADP + phosphate + H(+). In terms of biological role, part of the ABC transporter complex MetNIQ involved in methionine import. Responsible for energy coupling to the transport system. This chain is Methionine import ATP-binding protein MetN, found in Streptococcus pyogenes serotype M4 (strain MGAS10750).